Reading from the N-terminus, the 112-residue chain is Ribosome-binding factor A (112 aa).

This sequence belongs to the RbfA family. As to quaternary structure, monomer. Binds 30S ribosomal subunits, but not 50S ribosomal subunits or 70S ribosomes.

It localises to the cytoplasm. In terms of biological role, one of several proteins that assist in the late maturation steps of the functional core of the 30S ribosomal subunit. Associates with free 30S ribosomal subunits (but not with 30S subunits that are part of 70S ribosomes or polysomes). Required for efficient processing of 16S rRNA. May interact with the 5'-terminal helix region of 16S rRNA. This chain is Ribosome-binding factor A, found in Mycoplasma genitalium (strain ATCC 33530 / DSM 19775 / NCTC 10195 / G37) (Mycoplasmoides genitalium).